A 215-amino-acid chain; its full sequence is Pyrophosphatase PpaX (215 aa).

Asp-9 (nucleophile) is an active-site residue.

It belongs to the HAD-like hydrolase superfamily. PpaX family. Mg(2+) serves as cofactor.

The enzyme catalyses diphosphate + H2O = 2 phosphate + H(+). In terms of biological role, hydrolyzes pyrophosphate formed during P-Ser-HPr dephosphorylation by HPrK/P. Might play a role in controlling the intracellular pyrophosphate pool. The sequence is that of Pyrophosphatase PpaX from Halalkalibacterium halodurans (strain ATCC BAA-125 / DSM 18197 / FERM 7344 / JCM 9153 / C-125) (Bacillus halodurans).